The chain runs to 1544 residues: MSEGSGSENAAAAEAAAEAEAATEAALMAEAVAVAYQSDEEEQPEAEDMPEQAGDNQEEDAAEQQDGGEPEADEDADADDAMSVENAENESDSGGNAEETAAADRRQATKKELTQIIDKWEQQQTQNGYDPVPTLRSLAEIFEREKDVYRRKDPDPLDSRHPYRADPSCQYGLLLKLLFRKDTFMGKLLNDYLRENYFSRQNVSRSSLELNILACRLILEIMPGMETSAVFQTAEGDGTINRIYSWAEDSIEPLQSYATGLLAEAMEVSDIAINFRDLNIRLVPKMIKRLHMLLAISKSATSDVNTSMHNLSADSSTAGMLSWVACASNASAPQSPQHNGSGLGASSSQHGDASNMSILFENSRDAFSVSRYYKRMYIPLHPATADTSQMLIMRFLTSLGEYQEFLAMAFENNVMQLIFGYLENLDRRDTCLAYEVLKYLASLLCHKKFALEFISHGGLELLLKVPRPSLATTGVSIAIYYLAYCEDAMERICSMQRPLISELVRYALWILGRCHDSSKCHATMFFSLSFQFKVILDEFDAQDGLRKLYNVISVLKILDPSHNDSDNDSDFNEDVECASRQMVRHVCVALKRYMEAHFFYKYNSFLCQTNAASPAPSSAHYFNQNPTVAAKLTFDQLNDQIRTLQEHTSIRAHWQPVDQLMKLGGITMLLRIIAFSYDWVNSGRSETVRSALDVLSVCCIIPRVYVVLCERLLMLDKTTTSGFCSVLGAAAGEISSDAEVIKSALAVLCHCVCSPIIRKDSGTSLIKFGTSSRKNKANHKYAEELIERVWESVCSNNGIVVLLSLMQTKGPITDADCIRGMACRALAGLARSDRVRQIVSKLPLFASGQLQTLMRDPILQEKRAEHVIFQKYALELLERVSGKTKPLNNPLDPSLSNMHKANVIAQTRIQYNKQQLYQLIFEHLESNGLSQTAQMLQREVGLPLQTPTTRSFHQSPFDYKSLPSGSSSLSRNRLRSRMQDVNAAIMGNGDLNRSFGEDSSPAGAGGSNAGDGVSIPNFSSLNTTQTPIKIRRTDRSSVSRSIQKQAMEPGGMSVGLAEDGQLHPKRITLNTIVTEYLTNQHSLCNNPVTTCPQFDLYEPHKCPDPKPSRLLSSNYNLTSRHARTQAGFNTSRFDRRYVHTHFSPWRSIRSADYEDLEFTCCDLAGKYIIVGTQQGDGRVFNMNDGVEQFFSNCHNFSVDAIKANRAGDLVITSSFWRTPTSILWSIADDEFKLKLRLPDVTYCEFSQTVQDRLLGTQNECATLFDINTGSKVASFTPTIPNLYTKNRATLCRTDELILSDGVLWDVRSGKEIHKFDKFNQCISGVFHPNCLEIIANTEVWDLRTFHLLQTVPVLDQRNCTFSPMHVIYGASLGADRDHDMETTTYDTSFNVLDAYDYSSIATIDVKRNINDLSVSANGSLIAVVEDYSGYESKQETYVKIYAVGVKKSERSEEEDDEEVPESDEDGSDTGSENTFAIGQNLLGFPLLRNLHGSDNDDEDLDEDDDDGEPLDSDDDSDDDDGSDNGDDDGDFDVLEYFDRSSSDD.

The disordered stretch occupies residues 1 to 110 (MSEGSGSENA…AAADRRQATK (110 aa)). Over residues 10–35 (AAAAEAAAEAEAATEAALMAEAVAVA) the composition is skewed to low complexity. Over residues 38 to 91 (SDEEEQPEAEDMPEQAGDNQEEDAAEQQDGGEPEADEDADADDAMSVENAENES) the composition is skewed to acidic residues. A phosphoserine mark is found at Ser565 and Ser569. The region spanning 912–944 (NKQQLYQLIFEHLESNGLSQTAQMLQREVGLPL) is the LisH domain. Disordered stretches follow at residues 946–973 (TPTT…SRNR) and 987–1059 (GNGD…LAED). Ser955 bears the Phosphoserine mark. A compositionally biased stretch (low complexity) spans 961-971 (SLPSGSSSLSR). The segment covering 1016-1027 (PNFSSLNTTQTP) has biased composition (polar residues). 2 consecutive short sequence motifs (DWD box) follow at residues 1302–1309 (VLWDVRSG) and 1338–1345 (EVWDLRTF). Disordered stretches follow at residues 1447-1475 (KSER…ENTF) and 1487-1544 (LRNL…SSDD). Acidic residues-rich tracts occupy residues 1451–1467 (SEEE…EDGS) and 1495–1535 (NDDE…DVLE).

It belongs to the VPRBP/DCAF1 family. In terms of assembly, component of the CUL4-RBX1-DDB1-DCAF1 E3 ubiquitin-protein ligase complex. Interacts with l(2)gl.

The protein localises to the nucleus. It participates in protein modification; protein ubiquitination. Functionally, probable substrate recognition component of tsome E3 ubiquitin-protein ligase complex. Plays a key role in cell competition via its interaction with l(2)gl. The polypeptide is Protein mahjong (mahj) (Drosophila melanogaster (Fruit fly)).